The primary structure comprises 488 residues: Probable 26S proteasome non-ATPase regulatory subunit 3 (488 aa).

The disordered stretch occupies residues 1–20 (MTQDVEMKEQAAPPSNSLSS). The PCI domain occupies 240-421 (SRYLFYLGKI…GWMVSKETGD (182 aa)). The segment at 452 to 488 (FPPNSHKEKESAEKRRERQQQEQELAKHIAEEDDDDF) is disordered. The span at 456-481 (SHKEKESAEKRRERQQQEQELAKHIA) shows a compositional bias: basic and acidic residues.

The protein belongs to the proteasome subunit S3 family. The 26S proteasome is composed of a core protease, known as the 20S proteasome, capped at one or both ends by the 19S regulatory complex (RC). The RC is composed of at least 18 different subunits in two subcomplexes, the base and the lid, which form the portions proximal and distal to the 20S proteolytic core, respectively.

It localises to the nucleus. Functionally, acts as a regulatory subunit of the 26 proteasome which is involved in the ATP-dependent degradation of ubiquitinated proteins. The polypeptide is Probable 26S proteasome non-ATPase regulatory subunit 3 (21D7) (Nicotiana tabacum (Common tobacco)).